Reading from the N-terminus, the 727-residue chain is Pre-B-cell leukemia transcription factor-interacting protein 1 (727 aa).

Residues Met1–Ser10 are compositionally biased toward polar residues. The segment at Met1–Pro135 is disordered. Residues Arg39–Ala53 show a composition bias toward low complexity. At Ser43 the chain carries Phosphoserine. Positions Thr61–Ser70 are enriched in polar residues. Phosphoserine occurs at positions 130, 134, 147, 148, and 149. Thr153 carries the phosphothreonine modification. Coiled coils occupy residues Gln269–Asp353 and Ser380–Glu421. The Nuclear localization signal motif lies at Trp488–Trp506. Disordered regions lie at residues Glu491–Arg568 and Lys701–Gly727. 3 stretches are compositionally biased toward basic and acidic residues: residues Glu498 to Arg544, Pro551 to Arg568, and Gly716 to Gly727. Residues Asp696–Glu719 carry the Nuclear localization signal motif.

As to quaternary structure, interacts with ESR1, PBX1, PBX2 and PBX3. Interacts with TEX11.

The protein localises to the cytoplasm. It is found in the cytoskeleton. Its subcellular location is the nucleus. Its function is as follows. Regulator of pre-B-cell leukemia transcription factors (BPXs) function. Inhibits the binding of PBX1-HOX complex to DNA and blocks the transcriptional activity of E2A-PBX1. Tethers estrogen receptor-alpha (ESR1) to microtubules and allows them to influence estrogen receptors-alpha signaling. The protein is Pre-B-cell leukemia transcription factor-interacting protein 1 (PBXIP1) of Bos taurus (Bovine).